A 426-amino-acid chain; its full sequence is Amino acid transporter AVT1H (426 aa).

11 helical membrane-spanning segments follow: residues 34–54 (SFLH…QLSM), 55–75 (PYAV…FGIL), 110–130 (LIVC…YTIS), 148–168 (HFPA…SLWI), 182–202 (ILMS…GGVI), 215–235 (IPTV…FPNL), 248–268 (VSIV…ITGA), 292–312 (IALW…FAPL), 340–360 (LLLV…VLSL), 363–383 (SLVS…KICW), and 392–412 (AANL…SFES).

This sequence belongs to the amino acid/polyamine transporter 2 family. Amino acid/auxin permease (AAAP) (TC 2.A.18.5) subfamily.

Its subcellular location is the membrane. The sequence is that of Amino acid transporter AVT1H from Arabidopsis thaliana (Mouse-ear cress).